A 167-amino-acid chain; its full sequence is Large ribosomal subunit protein bL9 (167 aa).

The protein belongs to the bacterial ribosomal protein bL9 family.

In terms of biological role, binds to the 23S rRNA. The sequence is that of Large ribosomal subunit protein bL9 from Nitratidesulfovibrio vulgaris (strain DSM 19637 / Miyazaki F) (Desulfovibrio vulgaris).